Here is a 678-residue protein sequence, read N- to C-terminus: Methionine--tRNA ligase (678 aa).

Residues 18 to 28 (PYANGPIHLGH) carry the 'HIGH' region motif. Residues Cys149, Cys152, Cys162, and Cys165 each contribute to the Zn(2+) site. A 'KMSKS' region motif is present at residues 334–338 (KMSKS). Lys337 contacts ATP. In terms of domain architecture, tRNA-binding spans 577 to 678 (DFAKVDLRVA…SGATPGMRVM (102 aa)).

This sequence belongs to the class-I aminoacyl-tRNA synthetase family. MetG type 1 subfamily. In terms of assembly, homodimer. Requires Zn(2+) as cofactor.

The protein localises to the cytoplasm. It catalyses the reaction tRNA(Met) + L-methionine + ATP = L-methionyl-tRNA(Met) + AMP + diphosphate. Functionally, is required not only for elongation of protein synthesis but also for the initiation of all mRNA translation through initiator tRNA(fMet) aminoacylation. The protein is Methionine--tRNA ligase of Marinobacter nauticus (strain ATCC 700491 / DSM 11845 / VT8) (Marinobacter aquaeolei).